We begin with the raw amino-acid sequence, 284 residues long: Bifunctional protein FolD (284 aa).

NADP(+) contacts are provided by residues 166–168 (GRS) and serine 191.

The protein belongs to the tetrahydrofolate dehydrogenase/cyclohydrolase family. In terms of assembly, homodimer.

It carries out the reaction (6R)-5,10-methylene-5,6,7,8-tetrahydrofolate + NADP(+) = (6R)-5,10-methenyltetrahydrofolate + NADPH. The catalysed reaction is (6R)-5,10-methenyltetrahydrofolate + H2O = (6R)-10-formyltetrahydrofolate + H(+). It functions in the pathway one-carbon metabolism; tetrahydrofolate interconversion. Its function is as follows. Catalyzes the oxidation of 5,10-methylenetetrahydrofolate to 5,10-methenyltetrahydrofolate and then the hydrolysis of 5,10-methenyltetrahydrofolate to 10-formyltetrahydrofolate. This Leptospira borgpetersenii serovar Hardjo-bovis (strain JB197) protein is Bifunctional protein FolD.